A 961-amino-acid chain; its full sequence is DNA replication licensing factor MCM2 (961 aa).

Over residues 1-17 the composition is skewed to polar residues; it reads MDDSENNAPSTPGSPGF. 2 disordered regions span residues 1–81 and 120–220; these read MDDS…FNDN and AEAE…EEDE. The span at 39 to 78 shows a compositional bias: acidic residues; that stretch reads SDDDDDDVVGAEEAEVDPNVLPEDDGVVAAEEEEDGEDLF. 2 stretches are compositionally biased toward basic and acidic residues: residues 120 to 146 and 166 to 176; these read AEAE…LHDQ and PPREPRTPRSD. The segment covering 205-220 has biased composition (acidic residues); that stretch reads QTDDDPYEDEFDEEDE. The segment at 380-406 adopts a C4-type zinc-finger fold; the sequence is CSKCGTVLGPFFQNSYTEVKVGSCPEC. The 207-residue stretch at 524 to 730 folds into the MCM domain; sequence IGERIVKSIA…FTDEMLARFV (207 aa). 574–581 contributes to the ATP binding site; it reads GDPGTAKS. Positions 706–709 match the Arginine finger motif; that stretch reads SRFD.

This sequence belongs to the MCM family. Component of the minichromosome maintenance (MCM) complex, a heterotetramer composed of MCM2, MCM3, MCM4, MCM5, MCM6 and MCM7.

It localises to the nucleus. It carries out the reaction ATP + H2O = ADP + phosphate + H(+). Functionally, probable component of the MCM2-7 complex (MCM complex) that may function as a DNA helicase and which is essential to undergo a single round of replication initiation and elongation per cell cycle in eukaryotic cells. This is DNA replication licensing factor MCM2 from Oryza sativa subsp. indica (Rice).